A 24-amino-acid chain; its full sequence is 60 kDa chaperonin, mitochondrial (24 aa).

This sequence belongs to the chaperonin (HSP60) family. In terms of assembly, forms a single seven-member ring complex, in tight association with the p63 protein. In terms of tissue distribution, testis.

Its subcellular location is the mitochondrion. Its function is as follows. Implicated in mitochondrial protein import and macromolecular assembly. May facilitate the correct folding of imported proteins. May also prevent misfolding and promote the refolding and proper assembly of unfolded polypeptides generated under stress conditions in the mitochondrial matrix. This is 60 kDa chaperonin, mitochondrial from Heliothis virescens (Tobacco budworm moth).